A 264-amino-acid polypeptide reads, in one-letter code: Phosphoribosylaminoimidazole-succinocarboxamide synthase (264 aa).

The protein belongs to the SAICAR synthetase family.

It catalyses the reaction 5-amino-1-(5-phospho-D-ribosyl)imidazole-4-carboxylate + L-aspartate + ATP = (2S)-2-[5-amino-1-(5-phospho-beta-D-ribosyl)imidazole-4-carboxamido]succinate + ADP + phosphate + 2 H(+). The protein operates within purine metabolism; IMP biosynthesis via de novo pathway; 5-amino-1-(5-phospho-D-ribosyl)imidazole-4-carboxamide from 5-amino-1-(5-phospho-D-ribosyl)imidazole-4-carboxylate: step 1/2. The protein is Phosphoribosylaminoimidazole-succinocarboxamide synthase (purC) of Synechocystis sp. (strain ATCC 27184 / PCC 6803 / Kazusa).